We begin with the raw amino-acid sequence, 373 residues long: MRTTKKSSKKGIPLNLMVVGDVGLGRTAFINTLCEKPLIRHNNNFDPAEASSVSPVEIVPYQTDIILEDGTKINLTVLDTPHFGEAIDNENNFDIILQYIESQYDNVLEEESRIKRNARFCDDRVHALIYFISPTGHGLRELDIELMRRLAPRVNIIPAIAKADSLTAQELQTTKEMINADIEYYKIPVYDFPYDIEEDEEAIINLSQQLRATIPFAIVSSDRLIEMNGQTVRGRAYPWGVVEVDNPRHSDFLALRSALFATHIEDLHNITSNQLYETYRTEKLSTSQLLLDSTVGLDGKNLSQHDQVLREDRLRAIELSVQKEIEEKRRQLLAREEALRALEEKLAASTAAMANASVSTLPSSVSSTNHSQS.

In terms of domain architecture, Septin-type G spans 10 to 286; the sequence is KGIPLNLMVV…ETYRTEKLST (277 aa). The tract at residues 20-27 is G1 motif; that stretch reads GDVGLGRT. Position 20-27 (20-27) interacts with GTP; the sequence is GDVGLGRT. The tract at residues 79 to 82 is G3 motif; that stretch reads DTPH. The segment at 161–164 is G4 motif; it reads AKAD. GTP is bound by residues 162–170 and Arg-235; that span reads KADSLTAQE. A Phosphoserine modification is found at Ser-303. The stretch at 311–357 forms a coiled coil; it reads EDRLRAIELSVQKEIEEKRRQLLAREEALRALEEKLAASTAAMANAS.

Belongs to the TRAFAC class TrmE-Era-EngA-EngB-Septin-like GTPase superfamily. Septin GTPase family. In terms of assembly, component of the septin complex composed of two copies of each spn1, spn2, spn3 and spn4.

It localises to the cytoplasm. Its subcellular location is the cell cortex. Functionally, plays a role in the cell cycle. Involved in a late stage of septum formation leading to the separation of the daughter cells. This is Septin homolog spn3 (spn3) from Schizosaccharomyces pombe (strain 972 / ATCC 24843) (Fission yeast).